The primary structure comprises 141 residues: Hemoglobin subunit alpha-D (141 aa).

A Globin domain is found at 1–141; the sequence is MLTAEDKKLI…VAAVLAEKYR (141 aa). Heme b is bound by residues histidine 58 and histidine 87.

It belongs to the globin family. In terms of assembly, heterotetramer of two alpha-D chains and two beta chains. In terms of tissue distribution, red blood cells.

Its function is as follows. Involved in oxygen transport from the lung to the various peripheral tissues. This chain is Hemoglobin subunit alpha-D (HBAD), found in Cairina moschata (Muscovy duck).